We begin with the raw amino-acid sequence, 640 residues long: MSDLNDVQENAKLNSETRNTGKAEPPHGTTEYVAEAEISKNGVGSPKKSPKKGKVGKGDNNKVETELVHTALLEKDNPFMEEGPTGFTKSALLEIPGMRSHNLKNPNEDYEDDSEGLLPLNQESNAETCRTSLSGSINSMNGETSASEEPSVSNRKKSARIHILEAKRVSEGQGRAYIAYVIQFENSTVQRRYSDFESLRSILIRLFPMTLIPPIPEKQSIKNYGKSITGSSSKYLLPSEGSGSVDLSLSVIHASVNNSDEKLIRHRIRMLTEFLNKLLTNEEITKTSIITDFLDPNNHNWHEFVNSSSTFSSLPKSILQCNPLDPTNTTRIHAMLPIPGSSSQLLLNKESNDKKMDKERSKSFTNIEQDYKQYENLLDNGIYKYNRRTTKTYHDLKSDYNEIGEVFAQFAHEQAQVGELAEQLSYLSNAFSGSSISLEKLVGRLYYNINEPLNESVHMATSARELIKYRKLKYLQNEMIKKSLNSKRAQLEKLEAQNNEYKDVDKIIDNEMSKSHTINLERPNNNTGSGGKSYGGKLFNGFNKLASMVKDSVKYQETDPHTASINLKKEIEQLSESLEVTENDLEVISKVIKNDQLPKFSKEREVDLSEILKHYSRYMRNYARQNLEIWKEVKRHQDFA.

Polar residues-rich tracts occupy residues 1-18 (MSDL…SETR) and 126-153 (AETC…PSVS). 2 disordered regions span residues 1–63 (MSDL…NNKV) and 126–156 (AETC…SNRK). The residue at position 2 (serine 2) is an N-acetylserine. The PX domain occupies 140–301 (MNGETSASEE…DFLDPNNHNW (162 aa)). Residues arginine 192, serine 194, lysine 218, and arginine 267 each contribute to the a 1,2-diacyl-sn-glycero-3-phospho-(1D-myo-inositol-3-phosphate) site. 2 positions are modified to phosphoserine: serine 361 and serine 363. Coiled-coil stretches lie at residues 475–512 (LQNE…DNEM) and 562–593 (TASI…KVIK).

The protein belongs to the sorting nexin family. In terms of assembly, forms a complex with SNX4 and ATG17.

It is found in the endosome membrane. It localises to the preautophagosomal structure membrane. Functionally, required for cytoplasm to vacuole transport (Cvt), pexophagy and mitophagy. Also involved in endoplasmic reticulum-specific autophagic process and is essential for the survival of cells subjected to severe ER stress. Functions in protein retrieval from the endocytic pathway. Required for proper sorting of the v-SNARE protein SNC1. The polypeptide is Autophagy-related protein 20 (ATG20) (Saccharomyces cerevisiae (strain ATCC 204508 / S288c) (Baker's yeast)).